A 130-amino-acid chain; its full sequence is Universal stress protein MSMEG_4207 (130 aa).

K104 carries the post-translational modification N6-acetyllysine.

The protein belongs to the universal stress protein A family. In terms of processing, acetylated on Lys-104 by PatA in the presence of acetyl-CoA as an acetyl donor.

The polypeptide is Universal stress protein MSMEG_4207 (Mycolicibacterium smegmatis (strain ATCC 700084 / mc(2)155) (Mycobacterium smegmatis)).